Here is a 409-residue protein sequence, read N- to C-terminus: TM2 domain-containing protein ZK858.5 (409 aa).

The TM2 domain maps to 8 to 55 (VKPWIVRIILIVGGLFGAHRLYLKQVPEAFVFFSTLGVLLIGWLYDSF). The next 6 membrane-spanning stretches (helical) occupy residues 10–30 (PWIV…RLYL), 37–57 (FVFF…SFMF), 104–124 (VLYG…TFGW), 127–147 (INLI…IYII), 168–190 (MFIM…AIVS), and 209–229 (HFLF…LGCS).

It belongs to the TM2 family.

It is found in the membrane. This is TM2 domain-containing protein ZK858.5 from Caenorhabditis elegans.